The following is a 587-amino-acid chain: Ran GTPase-activating protein 1 (587 aa).

Alanine 2 carries the N-acetylalanine modification. Lysine 8 is covalently cross-linked (Glycyl lysine isopeptide (Lys-Gly) (interchain with G-Cter in SUMO1); alternate). Lysine 8 is covalently cross-linked (Glycyl lysine isopeptide (Lys-Gly) (interchain with G-Cter in SUMO2); alternate). A Glycyl lysine isopeptide (Lys-Gly) (interchain with G-Cter in SUMO2) cross-link involves residue lysine 15. Serine 24 carries the phosphoserine modification. 4 LRR repeats span residues 48–71 (FDSL…VIAK), 111–134 (GAQL…GFEA), 207–230 (IGTL…ALAQ), and 235–258 (NPLL…AMAE). Lysine 279 is covalently cross-linked (Glycyl lysine isopeptide (Lys-Gly) (interchain with G-Cter in SUMO2)). 2 LRR repeats span residues 292-319 (LPKL…AMAD) and 320-343 (KAEL…QLQE). A Phosphoserine modification is found at serine 301. The segment at 357-430 (LSDDEDEEEE…EPAPVLSSPP (74 aa)) is disordered. At serine 358 the chain carries Phosphoserine. Over residues 358–397 (SDDEDEEEEEEGEEEEEEAEEEEEEDEEEEEEEEEEEEEE) the composition is skewed to acidic residues. Residues 400-410 (QRGQGEKSATP) show a composition bias toward polar residues. Threonine 409 carries the post-translational modification Phosphothreonine; by CDK2. 2 positions are modified to phosphoserine: serine 428 and serine 435. Threonine 436 carries the phosphothreonine modification. A Phosphoserine modification is found at serine 442. Residue lysine 452 forms a Glycyl lysine isopeptide (Lys-Gly) (interchain with G-Cter in SUMO2) linkage. The SUMO conjugation motif lies at 523 to 526 (LKSE). Lysine 524 participates in a covalent cross-link: Glycyl lysine isopeptide (Lys-Gly) (interchain with G-Cter in SUMO1); alternate. Lysine 524 participates in a covalent cross-link: Glycyl lysine isopeptide (Lys-Gly) (interchain with G-Cter in SUMO2); alternate. An N6-acetyllysine; alternate modification is found at lysine 524. Lysine 586 is covalently cross-linked (Glycyl lysine isopeptide (Lys-Gly) (interchain with G-Cter in SUMO2)).

It belongs to the RNA1 family. In terms of assembly, homodimer. Interacts with RAN. Forms a complex with RANBP2/NUP358, NXF1 and NXT1. Forms a tight complex in association with RANBP2/NUP358 and UBE2I/UBC9, the ubiquitin-conjugating enzyme E2. Interacts with UBE2I; the interaction conjugates SUMO1 to RANGAP1, and subsequently stabilizes interactions of sumoylated RANGAP1 with RANBP2/NUP358. The complex composed of RANBP2, SUMO1, RANGAP1 and UBE2I associates with nuclear pore complexes. Identified in a complex composed of RAN, RANBP2, sumoylated RANGAP1, UBE2I and XPO1. Identified in a complex composed of RAN, RANGAP1 and RANBP1. Interacts with TRAF6. Interacts with SUMO1 and SENP1. Interacts (when sumoylated) with MYCBP2; interaction inhibits MYCBP2 E3 ubiquitin-protein ligase activity and promotes MYCBP2 translocation to the nucleus. Phosphorylation occurs before nuclear envelope breakdown and continues throughout mitosis. Phosphorylated by the M-phase kinase cyclin B/Cdk1, in vitro. Differential timimg of dephosphorylation occurs during phases of mitosis. The phosphorylated form remains associated with RANBP2/NUP358 and the SUMO E2-conjugating enzyme, UBE2I, on nuclear pore complex (NPC) diassembly and during mitosis. In terms of processing, sumoylated. Sumoylation is necessary for targeting to the nuclear envelope (NE), and for association with mitotic spindles and kinetochores during mitosis. Also required for interaction with RANBP2 and is mediated by UBE2I. Desumoylated by HINT1. As to expression, highly expressed in brain, thymus and testis.

The protein resides in the cytoplasm. Its subcellular location is the nucleus. It is found in the nucleoplasm. It localises to the nucleus envelope. The protein localises to the chromosome. The protein resides in the centromere. Its subcellular location is the kinetochore. It is found in the cytoskeleton. It localises to the spindle. Its function is as follows. GTPase activator for RAN. Converts cytoplasmic GTP-bound RAN to GDP-bound RAN, which is essential for RAN-mediated nuclear import and export. Mediates dissociation of cargo from nuclear export complexes containing XPO1, RAN and RANBP2 after nuclear export. The polypeptide is Ran GTPase-activating protein 1 (RANGAP1) (Homo sapiens (Human)).